The chain runs to 210 residues: ATP-dependent Clp protease proteolytic subunit (210 aa).

Ser107 functions as the Nucleophile in the catalytic mechanism. Residue His132 is part of the active site.

Belongs to the peptidase S14 family. In terms of assembly, fourteen ClpP subunits assemble into 2 heptameric rings which stack back to back to give a disk-like structure with a central cavity, resembling the structure of eukaryotic proteasomes.

The protein localises to the cytoplasm. The catalysed reaction is Hydrolysis of proteins to small peptides in the presence of ATP and magnesium. alpha-casein is the usual test substrate. In the absence of ATP, only oligopeptides shorter than five residues are hydrolyzed (such as succinyl-Leu-Tyr-|-NHMec, and Leu-Tyr-Leu-|-Tyr-Trp, in which cleavage of the -Tyr-|-Leu- and -Tyr-|-Trp bonds also occurs).. Its function is as follows. Cleaves peptides in various proteins in a process that requires ATP hydrolysis. Has a chymotrypsin-like activity. Plays a major role in the degradation of misfolded proteins. The protein is ATP-dependent Clp protease proteolytic subunit of Ruegeria sp. (strain TM1040) (Silicibacter sp.).